We begin with the raw amino-acid sequence, 368 residues long: Dihydroorotate dehydrogenase (quinone) (368 aa).

Residues 67–71 and T91 contribute to the FMN site; that span reads AGFDK. K71 is a binding site for substrate. Position 116-120 (116-120) interacts with substrate; the sequence is NRMGF. FMN contacts are provided by N146 and N179. N179 is a binding site for substrate. Catalysis depends on S182, which acts as the Nucleophile. N184 provides a ligand contact to substrate. Positions 222 and 250 each coordinate FMN. Position 251–252 (251–252) interacts with substrate; the sequence is NT. Residues G276, G305, and 326–327 each bind FMN; that span reads YS.

This sequence belongs to the dihydroorotate dehydrogenase family. Type 2 subfamily. As to quaternary structure, monomer. It depends on FMN as a cofactor.

It is found in the cell membrane. The catalysed reaction is (S)-dihydroorotate + a quinone = orotate + a quinol. It participates in pyrimidine metabolism; UMP biosynthesis via de novo pathway; orotate from (S)-dihydroorotate (quinone route): step 1/1. In terms of biological role, catalyzes the conversion of dihydroorotate to orotate with quinone as electron acceptor. The chain is Dihydroorotate dehydrogenase (quinone) from Streptomyces coelicolor (strain ATCC BAA-471 / A3(2) / M145).